Reading from the N-terminus, the 518-residue chain is GMP synthase [glutamine-hydrolyzing] (518 aa).

Residues 8-201 form the Glutamine amidotransferase type-1 domain; sequence TVLIIDFGSQ…VHKISGLKGN (194 aa). The active-site Nucleophile is Cys-85. Catalysis depends on residues His-175 and Glu-177. Residues 202–393 form the GMPS ATP-PPase domain; it reads WSMASYRDQA…LGLPEQFLGR (192 aa). 229–235 is a binding site for ATP; the sequence is SGGVDSS.

In terms of assembly, homodimer.

The catalysed reaction is XMP + L-glutamine + ATP + H2O = GMP + L-glutamate + AMP + diphosphate + 2 H(+). The protein operates within purine metabolism; GMP biosynthesis; GMP from XMP (L-Gln route): step 1/1. Functionally, catalyzes the synthesis of GMP from XMP. The chain is GMP synthase [glutamine-hydrolyzing] from Bartonella quintana (strain Toulouse) (Rochalimaea quintana).